Reading from the N-terminus, the 295-residue chain is Nuclear transcription factor Y subunit A-2 (295 aa).

The Subunit association domain (SAD) motif lies at 139-165 (YVNSKQYHGIIRRRQSRAKAAAVLDQK). A DNA-binding region (NFYA/HAP2-type) is located at residues 173–198 (KPYMHHSRHLHALRRPRGSGGRFLNT). Positions 178–189 (HSRHLHALRRPR) are enriched in basic residues. The tract at residues 178–244 (HSRHLHALRR…VVHPENGTMN (67 aa)) is disordered. Over residues 197-209 (NTKSQNLENSGTN) the composition is skewed to polar residues. A compositionally biased stretch (low complexity) spans 216–233 (SMQIQSQPKPQQSNSQNS).

It belongs to the NFYA/HAP2 subunit family. Heterotrimeric transcription factor composed of three components, NF-YA, NF-YB and NF-YC. NF-YB and NF-YC must interact and dimerize for NF-YA association and DNA binding. Component of a heat stress-inducible transcriptional complex with NF-YA and NF-YB subunits made, at least, of NFYA2, NFYB3 and DPB3-1 in cooperation with DREB2A. Ubiquitous. Expressed in seedlings, roots, petioles, hypocotyls, reproductive organ tissues and leaves.

The protein localises to the nucleus. Its function is as follows. Stimulates the transcription of various genes by recognizing and binding to a CCAAT motif in promoters. Promotes the expression of heat stress-inducible genes by contributing to the formation of a heat stress-specific transcriptional complex with NF-Y subunits (e.g. DPB3-1, NF-YA2 and NF-YB3) and DREB2A at the promoter of target genes, thus promoting heat tolerance. This is Nuclear transcription factor Y subunit A-2 from Arabidopsis thaliana (Mouse-ear cress).